A 142-amino-acid polypeptide reads, in one-letter code: Immunoglobulin omega chain (142 aa).

The signal sequence occupies residues 1 to 19; the sequence is MAWTSVLLMLLAHLTGCGP. Positions 20-41 are framework-1; sequence QPMVHQPPSASSSLGATIRLSC. C41 and C115 are oxidised to a cystine. The interval 42–56 is complementarity-determining-1; that stretch reads TLSNDHNIGIYSIYW. The tract at residues 57–70 is framework-2; the sequence is YQQRPGHPPRFLLR. Residues 71-81 are complementarity-determining-2; sequence YFSHSDKHQGP. The interval 82–115 is framework-3; it reads DIPPRFSGSKDTARNLGYLSISELQPEDEAVYYC.

Belongs to the immunoglobulin superfamily. In terms of tissue distribution, only expressed by pre-B-cells.

Functionally, associates with the Ig-mu chain to form a molecular complex that is expressed on the surface of pre-B-cells. This complex presumably regulates Ig gene rearrangements in the early steps of B-cell differentiation. The chain is Immunoglobulin omega chain from Mus musculus (Mouse).